A 234-amino-acid chain; its full sequence is Large ribosomal subunit protein uL1 (234 aa).

Belongs to the universal ribosomal protein uL1 family. Part of the 50S ribosomal subunit.

Functionally, binds directly to 23S rRNA. The L1 stalk is quite mobile in the ribosome, and is involved in E site tRNA release. In terms of biological role, protein L1 is also a translational repressor protein, it controls the translation of the L11 operon by binding to its mRNA. The protein is Large ribosomal subunit protein uL1 of Edwardsiella ictaluri (strain 93-146).